The primary structure comprises 427 residues: Enolase (427 aa).

Q163 contributes to the (2R)-2-phosphoglycerate binding site. The Proton donor role is filled by E205. Residues D242, E285, and D312 each contribute to the Mg(2+) site. Positions 337, 366, 367, and 388 each coordinate (2R)-2-phosphoglycerate. K337 serves as the catalytic Proton acceptor.

It belongs to the enolase family. Mg(2+) serves as cofactor.

It is found in the cytoplasm. Its subcellular location is the secreted. It localises to the cell surface. It catalyses the reaction (2R)-2-phosphoglycerate = phosphoenolpyruvate + H2O. It participates in carbohydrate degradation; glycolysis; pyruvate from D-glyceraldehyde 3-phosphate: step 4/5. Functionally, catalyzes the reversible conversion of 2-phosphoglycerate (2-PG) into phosphoenolpyruvate (PEP). It is essential for the degradation of carbohydrates via glycolysis. In Laribacter hongkongensis (strain HLHK9), this protein is Enolase.